A 295-amino-acid polypeptide reads, in one-letter code: Small ribosomal subunit protein bS1 (295 aa).

3 consecutive S1 motif domains span residues 28–97 (GQLV…VSLR), 115–179 (GQTV…LSER), and 193–261 (GQLI…LSTK).

The protein belongs to the bacterial ribosomal protein bS1 family.

Binds mRNA. The sequence is that of Small ribosomal subunit protein bS1 (rpsA) from Synechococcus elongatus (strain ATCC 33912 / PCC 7942 / FACHB-805) (Anacystis nidulans R2).